Consider the following 330-residue polypeptide: Aquaporin-3 (330 aa).

The Cytoplasmic segment spans residues 1-40; sequence MSATPIIHLRDVKKRTGVLNAWERVRNKPQVHWAMECFAE. Residues 41–61 form a helical membrane-spanning segment; it reads ALGVFFYVYFGLGSTAAWVIG. The Extracellular segment spans residues 62–71; the sequence is NILKQSGLSS. The helical transmembrane segment at 72 to 92 threads the bilayer; that stretch reads VFQIGFAYAFGILFAIGVCAA. Residues 93–124 are Cytoplasmic-facing; that stretch reads TSGGHFNPCVTIAFTIFRGFPPLKAVRYIVAQ. Positions 99–101 match the NPA 1 motif; it reads NPC. The chain crosses the membrane as a helical span at residues 125-145; the sequence is ILGAYIASALVYNQWKVLIVE. Over 146–157 the chain is Extracellular; it reads SELLLKQAGVYE. The chain crosses the membrane as a helical span at residues 158–178; it reads TTMFTPNGPAGIFALYLLPGA. The Cytoplasmic portion of the chain corresponds to 179-183; it reads QTLPR. Residues 184 to 204 form a helical membrane-spanning segment; that stretch reads AFLNEFVNCFVLALVIWAALD. Residues 205–207 lie on the Extracellular side of the membrane; the sequence is PTS. The chain crosses the membrane as a helical span at residues 208-228; that stretch reads FMIPPVMAPFIIAAAYAGSIW. Residues 229 to 264 lie on the Cytoplasmic side of the membrane; it reads GYAVPAISLNSARDIGCRLFALTIWGKSAAGGSYSA. Residues 238–240 carry the NPA 2 motif; the sequence is NSA. Residues 265–285 traverse the membrane as a helical segment; it reads IAALVNIPATLLAAVVYELFL. Over 286-330 the chain is Extracellular; it reads VDSDRVVAGSHLEFMNVAANHRRHRQQAEDDNLVEADDSSQEKPV. The interval 308–330 is disordered; that stretch reads RHRQQAEDDNLVEADDSSQEKPV. Acidic residues predominate over residues 314–324; that stretch reads EDDNLVEADDS.

The protein belongs to the MIP/aquaporin (TC 1.A.8) family.

It is found in the cell membrane. The catalysed reaction is H2O(in) = H2O(out). It catalyses the reaction CO2(out) = CO2(in). Its function is as follows. Water channel required to facilitate the transport of water across membranes. Also mediates the transport of carbon dioxide across the membrane. The polypeptide is Aquaporin-3 (Laccaria bicolor (Bicoloured deceiver)).